The chain runs to 594 residues: Cytosolic Fe-S cluster assembly factor NAR1 (594 aa).

[4Fe-4S] cluster is bound by residues cysteine 20, cysteine 88, cysteine 91, cysteine 94, cysteine 209, and cysteine 264. The disordered stretch occupies residues 444–465 (RRARMSKSEDSSGASASSMAPA). A compositionally biased stretch (low complexity) spans 454-465 (SSGASASSMAPA). The [4Fe-4S] cluster site is built by cysteine 481 and cysteine 485. Positions 492–511 (IAAPAPTSTPPAAPAPAHAA) are disordered.

This sequence belongs to the NARF family.

Functionally, component of the cytosolic Fe/S protein assembly machinery. Required for maturation of extramitochondrial Fe/S proteins. May play a role in the transfer of pre-assembled Fe/S clusters to target apoproteins. In Lodderomyces elongisporus (strain ATCC 11503 / CBS 2605 / JCM 1781 / NBRC 1676 / NRRL YB-4239) (Yeast), this protein is Cytosolic Fe-S cluster assembly factor NAR1 (NAR1).